We begin with the raw amino-acid sequence, 384 residues long: Putative 8-amino-7-oxononanoate synthase (384 aa).

Position 22 (R22) interacts with substrate. Pyridoxal 5'-phosphate is bound at residue 109-110 (GY). H134 lines the substrate pocket. Pyridoxal 5'-phosphate-binding positions include S182, 207 to 210 (DDAH), and 236 to 239 (TLSK). K239 is subject to N6-(pyridoxal phosphate)lysine. A substrate-binding site is contributed by T348.

The protein belongs to the class-II pyridoxal-phosphate-dependent aminotransferase family. BioF subfamily. Homodimer. Requires pyridoxal 5'-phosphate as cofactor.

It carries out the reaction 6-carboxyhexanoyl-[ACP] + L-alanine + H(+) = (8S)-8-amino-7-oxononanoate + holo-[ACP] + CO2. The protein operates within cofactor biosynthesis; biotin biosynthesis. Functionally, catalyzes the decarboxylative condensation of pimeloyl-[acyl-carrier protein] and L-alanine to produce 8-amino-7-oxononanoate (AON), [acyl-carrier protein], and carbon dioxide. In Caulobacter vibrioides (strain ATCC 19089 / CIP 103742 / CB 15) (Caulobacter crescentus), this protein is Putative 8-amino-7-oxononanoate synthase (bioF).